Here is a 145-residue protein sequence, read N- to C-terminus: uncharacterized protein (145 aa).

Belongs to the asfivirus K145R family.

The protein localises to the virion. This is an uncharacterized protein from African swine fever virus (isolate Tick/South Africa/Pretoriuskop Pr4/1996) (ASFV).